A 160-amino-acid polypeptide reads, in one-letter code: MTNKAIYPGTFDPLTNGHLDLVTRAAKMFDVVVLAIAASPSKRPLFDLNERVALATQVTAHLPNVKVTGFSDLMADFARQQQANILIRGVRAMTDVDYEMPLAKMNRHLMPALETVFMLPAEAWSYISSTLVKEVALHGGDVDHFLPAPIAKEVRARLHP.

Position 10 (T10) interacts with substrate. ATP contacts are provided by residues 10 to 11 (TF) and H18. Substrate-binding residues include K42, M74, and R88. ATP contacts are provided by residues 89 to 91 (GVR), E99, and 124 to 130 (WSYISST).

Belongs to the bacterial CoaD family. As to quaternary structure, homohexamer. The cofactor is Mg(2+).

The protein localises to the cytoplasm. The enzyme catalyses (R)-4'-phosphopantetheine + ATP + H(+) = 3'-dephospho-CoA + diphosphate. Its pathway is cofactor biosynthesis; coenzyme A biosynthesis; CoA from (R)-pantothenate: step 4/5. Functionally, reversibly transfers an adenylyl group from ATP to 4'-phosphopantetheine, yielding dephospho-CoA (dPCoA) and pyrophosphate. The polypeptide is Phosphopantetheine adenylyltransferase (Sodalis glossinidius (strain morsitans)).